The sequence spans 75 residues: UPF0270 protein PSEEN1465 (75 aa).

The protein belongs to the UPF0270 family.

In Pseudomonas entomophila (strain L48), this protein is UPF0270 protein PSEEN1465.